A 212-amino-acid polypeptide reads, in one-letter code: Acyl-homoserine-lactone synthase (212 aa).

It belongs to the autoinducer synthase family.

The enzyme catalyses a fatty acyl-[ACP] + S-adenosyl-L-methionine = an N-acyl-L-homoserine lactone + S-methyl-5'-thioadenosine + holo-[ACP] + H(+). In terms of biological role, required for the synthesis of OHHL (N-(3-oxohexanoyl)-L-homoserine lactone), an autoinducer molecule which binds to the EchR transcriptional regulator. This Dickeya chrysanthemi (Pectobacterium chrysanthemi) protein is Acyl-homoserine-lactone synthase (echI).